The primary structure comprises 152 residues: Cell division protein SepF (152 aa).

Residues 23-32 (EVAREPEPMQ) are compositionally biased toward basic and acidic residues. The interval 23–42 (EVAREPEPMQKKTKKEKPSK) is disordered.

The protein belongs to the SepF family. In terms of assembly, homodimer. Interacts with FtsZ.

It localises to the cytoplasm. In terms of biological role, cell division protein that is part of the divisome complex and is recruited early to the Z-ring. Probably stimulates Z-ring formation, perhaps through the cross-linking of FtsZ protofilaments. Its function overlaps with FtsA. The sequence is that of Cell division protein SepF from Listeria welshimeri serovar 6b (strain ATCC 35897 / DSM 20650 / CCUG 15529 / CIP 8149 / NCTC 11857 / SLCC 5334 / V8).